The sequence spans 249 residues: Triosephosphate isomerase (249 aa).

Substrate is bound at residue 9 to 11; it reads NWK. The active-site Electrophile is His-94. Glu-166 (proton acceptor) is an active-site residue. Substrate is bound by residues Gly-172, Ser-211, and 232–233; that span reads GG.

This sequence belongs to the triosephosphate isomerase family. As to quaternary structure, homodimer.

It is found in the cytoplasm. It catalyses the reaction D-glyceraldehyde 3-phosphate = dihydroxyacetone phosphate. It participates in carbohydrate biosynthesis; gluconeogenesis. The protein operates within carbohydrate degradation; glycolysis; D-glyceraldehyde 3-phosphate from glycerone phosphate: step 1/1. Its function is as follows. Involved in the gluconeogenesis. Catalyzes stereospecifically the conversion of dihydroxyacetone phosphate (DHAP) to D-glyceraldehyde-3-phosphate (G3P). In Chromohalobacter salexigens (strain ATCC BAA-138 / DSM 3043 / CIP 106854 / NCIMB 13768 / 1H11), this protein is Triosephosphate isomerase.